The chain runs to 503 residues: Aspartyl/glutamyl-tRNA(Asn/Gln) amidotransferase subunit B (503 aa).

It belongs to the GatB/GatE family. GatB subfamily. In terms of assembly, heterotrimer of A, B and C subunits.

The catalysed reaction is L-glutamyl-tRNA(Gln) + L-glutamine + ATP + H2O = L-glutaminyl-tRNA(Gln) + L-glutamate + ADP + phosphate + H(+). It carries out the reaction L-aspartyl-tRNA(Asn) + L-glutamine + ATP + H2O = L-asparaginyl-tRNA(Asn) + L-glutamate + ADP + phosphate + 2 H(+). In terms of biological role, allows the formation of correctly charged Asn-tRNA(Asn) or Gln-tRNA(Gln) through the transamidation of misacylated Asp-tRNA(Asn) or Glu-tRNA(Gln) in organisms which lack either or both of asparaginyl-tRNA or glutaminyl-tRNA synthetases. The reaction takes place in the presence of glutamine and ATP through an activated phospho-Asp-tRNA(Asn) or phospho-Glu-tRNA(Gln). This chain is Aspartyl/glutamyl-tRNA(Asn/Gln) amidotransferase subunit B, found in Mycolicibacterium smegmatis (strain ATCC 700084 / mc(2)155) (Mycobacterium smegmatis).